A 383-amino-acid polypeptide reads, in one-letter code: Succinyl-diaminopimelate desuccinylase (383 aa).

H73 serves as a coordination point for Zn(2+). The active site involves D75. A Zn(2+)-binding site is contributed by D107. Residue E141 is the Proton acceptor of the active site. The Zn(2+) site is built by E142, E170, and H356.

It belongs to the peptidase M20A family. DapE subfamily. In terms of assembly, homodimer. The cofactor is Zn(2+). It depends on Co(2+) as a cofactor.

The enzyme catalyses N-succinyl-(2S,6S)-2,6-diaminopimelate + H2O = (2S,6S)-2,6-diaminopimelate + succinate. It functions in the pathway amino-acid biosynthesis; L-lysine biosynthesis via DAP pathway; LL-2,6-diaminopimelate from (S)-tetrahydrodipicolinate (succinylase route): step 3/3. Functionally, catalyzes the hydrolysis of N-succinyl-L,L-diaminopimelic acid (SDAP), forming succinate and LL-2,6-diaminopimelate (DAP), an intermediate involved in the bacterial biosynthesis of lysine and meso-diaminopimelic acid, an essential component of bacterial cell walls. The chain is Succinyl-diaminopimelate desuccinylase from Pseudomonas syringae pv. syringae (strain B728a).